The chain runs to 426 residues: UPF0597 protein CLD_2825 (426 aa).

Belongs to the UPF0597 family.

The protein is UPF0597 protein CLD_2825 of Clostridium botulinum (strain Okra / Type B1).